We begin with the raw amino-acid sequence, 74 residues long: uncharacterized protein (74 aa).

Residues 8-30 form a helical membrane-spanning segment; sequence LAAAVSSSAASAGVSRIAASAMA.

It is found in the mitochondrion outer membrane. This is an uncharacterized protein from Saccharomyces cerevisiae (strain ATCC 204508 / S288c) (Baker's yeast).